The chain runs to 431 residues: Tol-Pal system protein TolB (431 aa).

Positions 1–26 (MSLMTKLGFRALVASCLITAGSAANA) are cleaved as a signal peptide. The tract at residues 406-431 (DGSAPPQILSVQGGSVREPSWGPFMQ) is disordered.

It belongs to the TolB family. In terms of assembly, the Tol-Pal system is composed of five core proteins: the inner membrane proteins TolA, TolQ and TolR, the periplasmic protein TolB and the outer membrane protein Pal. They form a network linking the inner and outer membranes and the peptidoglycan layer.

Its subcellular location is the periplasm. Its function is as follows. Part of the Tol-Pal system, which plays a role in outer membrane invagination during cell division and is important for maintaining outer membrane integrity. The chain is Tol-Pal system protein TolB from Burkholderia cenocepacia (strain HI2424).